A 393-amino-acid chain; its full sequence is Matrix metalloproteinase-23 (393 aa).

The Cytoplasmic portion of the chain corresponds to 1–20 (MGRGACVPSAASGAGDRARQ). A propeptide spanning residues 1 to 81 (MGRGACVPSA…PHPPVPRRRR (81 aa)) is cleaved from the precursor. The helical; Signal-anchor for type II membrane protein transmembrane segment at 21–41 (LGAVLGALCLFPALVLLAWPG) threads the bilayer. Topologically, residues 42-393 (TPANGAGARV…TYSWRIRVRS (352 aa)) are lumenal. Positions 60–79 (TSGVLASGSLGPPHPPVPRR) are disordered. Residues N95 and N151 are each glycosylated (N-linked (GlcNAc...) asparagine). H214 is a binding site for Zn(2+). Residue E215 is part of the active site. 2 residues coordinate Zn(2+): H218 and H224. Residue N235 is glycosylated (N-linked (GlcNAc...) asparagine). A ShKT domain is found at 258 to 292 (CLDRLFVCASWARRGFCDTRRRLMKRLCPSSCDFC). Disulfide bonds link C258/C292, C265/C285, and C274/C289. In terms of domain architecture, Ig-like C2-type spans 298-383 (PTVAATPPPP…VVRRRQRVLS (86 aa)). N319 carries N-linked (GlcNAc...) asparagine glycosylation. C324 and C373 are oxidised to a cystine.

The protein belongs to the peptidase M10A family. Requires Zn(2+) as cofactor. In terms of processing, N-glycosylated. Post-translationally, proteolytic cleavage might yield an active form.

It localises to the membrane. Its subcellular location is the endoplasmic reticulum membrane. Functionally, protease. May regulate the surface expression of some potassium channels by retaining them in the endoplasmic reticulum. The polypeptide is Matrix metalloproteinase-23 (MMP23) (Bos taurus (Bovine)).